A 154-amino-acid chain; its full sequence is 6,7-dimethyl-8-ribityllumazine synthase (154 aa).

5-amino-6-(D-ribitylamino)uracil-binding positions include F15, 47-49 (TFD), and 71-73 (AVI). Residue 76 to 77 (ET) participates in (2S)-2-hydroxy-3-oxobutyl phosphate binding. The Proton donor role is filled by H79. L104 lines the 5-amino-6-(D-ribitylamino)uracil pocket. R119 contributes to the (2S)-2-hydroxy-3-oxobutyl phosphate binding site.

The protein belongs to the DMRL synthase family.

The enzyme catalyses (2S)-2-hydroxy-3-oxobutyl phosphate + 5-amino-6-(D-ribitylamino)uracil = 6,7-dimethyl-8-(1-D-ribityl)lumazine + phosphate + 2 H2O + H(+). It functions in the pathway cofactor biosynthesis; riboflavin biosynthesis; riboflavin from 2-hydroxy-3-oxobutyl phosphate and 5-amino-6-(D-ribitylamino)uracil: step 1/2. Functionally, catalyzes the formation of 6,7-dimethyl-8-ribityllumazine by condensation of 5-amino-6-(D-ribitylamino)uracil with 3,4-dihydroxy-2-butanone 4-phosphate. This is the penultimate step in the biosynthesis of riboflavin. The chain is 6,7-dimethyl-8-ribityllumazine synthase from Saccharolobus solfataricus (strain ATCC 35092 / DSM 1617 / JCM 11322 / P2) (Sulfolobus solfataricus).